The primary structure comprises 255 residues: MNIAKIVREAREQSRLTTLDFATGIFDEFIQLHGDRSFRDDGAVVGGIGWLGDQAVTVVGIQKGKSLQDNLKRNFGQPHPEGYRKALRLMKHAEKFGRPVVTFINTAGAYPGVGAEERGQGEAIARNLMEMSDLKVPIIAIIIGEGGSGGALALAVADRVWMLENSIYAILSPEGFASILWKDGSRAMEAAELMKITSHELLEMDVVDKVISEVGLSSKELIKSVKKELQTELARLSQKPLEELLEERYQRFRKY.

A CoA carboxyltransferase C-terminal domain is found at Met-1–Arg-235.

The protein belongs to the AccA family. Acetyl-CoA carboxylase is a heterohexamer composed of biotin carboxyl carrier protein (AccB), biotin carboxylase (AccC) and two subunits each of ACCase subunit alpha (AccA) and ACCase subunit beta (AccD).

The protein resides in the cytoplasm. The enzyme catalyses N(6)-carboxybiotinyl-L-lysyl-[protein] + acetyl-CoA = N(6)-biotinyl-L-lysyl-[protein] + malonyl-CoA. Its pathway is lipid metabolism; malonyl-CoA biosynthesis; malonyl-CoA from acetyl-CoA: step 1/1. In terms of biological role, component of the acetyl coenzyme A carboxylase (ACC) complex. First, biotin carboxylase catalyzes the carboxylation of biotin on its carrier protein (BCCP) and then the CO(2) group is transferred by the carboxyltransferase to acetyl-CoA to form malonyl-CoA. The protein is Acetyl-coenzyme A carboxylase carboxyl transferase subunit alpha of Streptococcus pneumoniae (strain CGSP14).